A 393-amino-acid polypeptide reads, in one-letter code: NAD(P)H-quinone oxidoreductase subunit H, chloroplastic (393 aa).

The protein belongs to the complex I 49 kDa subunit family. As to quaternary structure, NDH is composed of at least 16 different subunits, 5 of which are encoded in the nucleus.

It is found in the plastid. Its subcellular location is the chloroplast thylakoid membrane. The enzyme catalyses a plastoquinone + NADH + (n+1) H(+)(in) = a plastoquinol + NAD(+) + n H(+)(out). It catalyses the reaction a plastoquinone + NADPH + (n+1) H(+)(in) = a plastoquinol + NADP(+) + n H(+)(out). In terms of biological role, NDH shuttles electrons from NAD(P)H:plastoquinone, via FMN and iron-sulfur (Fe-S) centers, to quinones in the photosynthetic chain and possibly in a chloroplast respiratory chain. The immediate electron acceptor for the enzyme in this species is believed to be plastoquinone. Couples the redox reaction to proton translocation, and thus conserves the redox energy in a proton gradient. The protein is NAD(P)H-quinone oxidoreductase subunit H, chloroplastic of Olimarabidopsis pumila (Dwarf rocket).